A 286-amino-acid chain; its full sequence is Putative S-adenosyl-L-methionine-dependent methyltransferase FRAAL3718 (286 aa).

Residues Asp-122 and 151–152 (DL) contribute to the S-adenosyl-L-methionine site.

This sequence belongs to the UPF0677 family.

In terms of biological role, exhibits S-adenosyl-L-methionine-dependent methyltransferase activity. This chain is Putative S-adenosyl-L-methionine-dependent methyltransferase FRAAL3718, found in Frankia alni (strain DSM 45986 / CECT 9034 / ACN14a).